The primary structure comprises 322 residues: Extracellular metalloprotease AFUB_008060 (322 aa).

Residues 1–22 form the signal peptide; the sequence is MLPFNSCVYVLLIISLMSNCRA. Asn123 and Asn197 each carry an N-linked (GlcNAc...) asparagine glycan. His233 provides a ligand contact to Zn(2+). Residue Glu234 is part of the active site. His237 contributes to the Zn(2+) binding site. An intrachain disulfide couples Cys272 to Cys299.

Belongs to the peptidase M43B family.

It is found in the secreted. In terms of biological role, secreted metalloproteinase that allows assimilation of proteinaceous substrates. Plays a pivotal role as a pathogenicity determinant during infections and contributes to the ability of the pathogen to persist within the mammalian host. The chain is Extracellular metalloprotease AFUB_008060 from Aspergillus fumigatus (strain CBS 144.89 / FGSC A1163 / CEA10) (Neosartorya fumigata).